The following is a 248-amino-acid chain: Protein maestro (248 aa).

A disordered region spans residues 1 to 20 (MDQRQRRILGQPLSIPTSQP). 2 HEAT repeats span residues 44–79 (EPLKNVLFILAERARDPNANKRHTAMRGLGTMAREA) and 128–163 (SFFIDITLQTRTLLDDENDSLRYSAFVLFGQLAAFA).

It is found in the nucleus. It localises to the nucleolus. In Macaca fascicularis (Crab-eating macaque), this protein is Protein maestro (MRO).